Here is a 540-residue protein sequence, read N- to C-terminus: Chaperonin GroEL (540 aa).

ATP is bound by residues 30–33 (TLGP), Lys-51, 87–91 (DGTTT), Gly-415, and Asp-495.

This sequence belongs to the chaperonin (HSP60) family. As to quaternary structure, forms a cylinder of 14 subunits composed of two heptameric rings stacked back-to-back. Interacts with the co-chaperonin GroES.

It is found in the cytoplasm. The enzyme catalyses ATP + H2O + a folded polypeptide = ADP + phosphate + an unfolded polypeptide.. In terms of biological role, together with its co-chaperonin GroES, plays an essential role in assisting protein folding. The GroEL-GroES system forms a nano-cage that allows encapsulation of the non-native substrate proteins and provides a physical environment optimized to promote and accelerate protein folding. This chain is Chaperonin GroEL, found in Serratia ficaria.